Reading from the N-terminus, the 710-residue chain is Early transcription factor 82 kDa subunit (710 aa).

Belongs to the poxviridae VETF large subunit family. Heterodimer of a 70 kDa and a 82 kDa subunit. Part of the early transcription complex composed of ETF, RAP94/OPG109, and the DNA-directed RNA polymerase.

The protein localises to the virion. Acts with RNA polymerase to initiate transcription from early gene promoters. Is recruited by the RPO-associated protein of 94 kDa RAP94/OPG109 to form the early transcription complex, which also contains the core RNA polymerase. ETF heterodimer binds to early gene promoters. This Vaccinia virus (strain Ankara) (VACV) protein is Early transcription factor 82 kDa subunit (OPG133).